We begin with the raw amino-acid sequence, 203 residues long: Small ribosomal subunit protein uS5 (203 aa).

A compositionally biased stretch (basic and acidic residues) spans 1 to 25; that stretch reads MPGRTRRDGGSESGGKDRRDRRDGG. Residues 1–36 form a disordered region; that stretch reads MPGRTRRDGGSESGGKDRRDRRDGGRGGAAQEKTPQ. Residues 36–99 enclose the S5 DRBM domain; it reads QFERVVTINR…EEAKKNFFRV (64 aa).

The protein belongs to the universal ribosomal protein uS5 family. In terms of assembly, part of the 30S ribosomal subunit. Contacts proteins S4 and S8.

With S4 and S12 plays an important role in translational accuracy. In terms of biological role, located at the back of the 30S subunit body where it stabilizes the conformation of the head with respect to the body. This Saccharopolyspora erythraea (strain ATCC 11635 / DSM 40517 / JCM 4748 / NBRC 13426 / NCIMB 8594 / NRRL 2338) protein is Small ribosomal subunit protein uS5.